The sequence spans 287 residues: 2-dehydro-3-deoxyphosphooctonate aldolase (287 aa).

It belongs to the KdsA family.

The protein resides in the cytoplasm. It catalyses the reaction D-arabinose 5-phosphate + phosphoenolpyruvate + H2O = 3-deoxy-alpha-D-manno-2-octulosonate-8-phosphate + phosphate. The protein operates within carbohydrate biosynthesis; 3-deoxy-D-manno-octulosonate biosynthesis; 3-deoxy-D-manno-octulosonate from D-ribulose 5-phosphate: step 2/3. Its pathway is bacterial outer membrane biogenesis; lipopolysaccharide biosynthesis. This chain is 2-dehydro-3-deoxyphosphooctonate aldolase, found in Leptospira interrogans serogroup Icterohaemorrhagiae serovar copenhageni (strain Fiocruz L1-130).